The following is an 87-amino-acid chain: Large ribosomal subunit protein bL31B (87 aa).

The protein belongs to the bacterial ribosomal protein bL31 family. Type B subfamily. Part of the 50S ribosomal subunit.

The protein is Large ribosomal subunit protein bL31B of Shigella boydii serotype 4 (strain Sb227).